Reading from the N-terminus, the 611-residue chain is Oxidoreductase cicC (611 aa).

The N-terminal stretch at 1–20 (MALRYLNKFSLLSLAVPTLA) is a signal peptide. FAD-binding positions include 45 to 46 (NA) and 65 to 66 (EA). N-linked (GlcNAc...) asparagine glycosylation is found at Asn76 and Asn113. FAD-binding positions include Val123 and 131 to 134 (NLMT). Residues Asn282, Asn410, and Asn475 are each glycosylated (N-linked (GlcNAc...) asparagine). The Proton acceptor role is filled by His547. The Proton donor role is filled by His547. An FAD-binding site is contributed by Ala581. The active-site Proton acceptor is the His591. Position 592 to 593 (592 to 593 (PI)) interacts with FAD.

Belongs to the GMC oxidoreductase family. The cofactor is FAD.

The protein operates within phytotoxin biosynthesis. Oxidoreductase; part of the gene cluster that mediates the biosynthesis of cichorine, a phytotoxin active against knapweed, corn, and soybeans. The first step in the pathway is performed by the non-reducing polyketide synthase pkbA that condenses one acetyl-CoA starter unit with 3 malonyl-CoA units. PkbA also catalyzes one methylation step to produce 3-methylorsellinate. The nonribosomal peptide synthase-like protein cicB, the cytochrome P450 monooxygenase cicH and the O-methyltransferase cicE are involved in the conversion of 3-methylorsellinate into nidulol. CicB converts 3-methylorsellinate to a yet unidentified intermediate, cicH may play a ring-closing role for cichorine and cicE is plausibly responsible for the methylation of one of the phenol groups. The oxidoreductase cicC acts downstream with still unidentified enzymes to further convert nidulol into cichorine. This is Oxidoreductase cicC from Emericella nidulans (strain FGSC A4 / ATCC 38163 / CBS 112.46 / NRRL 194 / M139) (Aspergillus nidulans).